The chain runs to 595 residues: Probable hydrolase M10 (595 aa).

An N-terminal signal peptide occupies residues 1–23; sequence MRFTSTILLRVAVLLSLGGGSQT. Residues Asn-59, Asn-87, Asn-266, Asn-436, Asn-457, and Asn-561 are each glycosylated (N-linked (GlcNAc...) asparagine).

It belongs to the beta-lactamase family.

It functions in the pathway secondary metabolite biosynthesis. In terms of biological role, probable hydrolase; part of the gene cluster that mediates the biosynthesis of squalestatin S1 (SQS1, also known as zaragozic acid A), a heavily oxidized fungal polyketide that offers potent cholesterol lowering activity by targeting squalene synthase (SS). SQS1 is composed of a 2,8-dioxobicyclic[3.2.1]octane-3,4,5-tricarboxyclic acid core that is connected to two lipophilic polyketide arms. These initial steps feature the priming of an unusual benzoic acid starter unit onto the highly reducing polyketide synthase pks2, followed by oxaloacetate extension and product release to generate a tricarboxylic acid containing product. The phenylalanine ammonia lyase (PAL) M7 and the acyl-CoA ligase M9 are involved in transforming phenylalanine into benzoyl-CoA. The citrate synthase-like protein R3 is involved in connecting the C-alpha-carbons of the hexaketide chain and oxaloacetate to afford the tricarboxylic acid unit. The potential hydrolytic enzymes, M8 and M10, are in close proximity to pks2 and may participate in product release. On the other side, the tetraketide arm is synthesized by a the squalestatin tetraketide synthase pks1 and enzymatically esterified to the core in the last biosynthetic step, by the acetyltransferase M4. The biosynthesis of the tetraketide must involve 3 rounds of chain extension. After the first and second rounds methyl-transfer occurs, and in all rounds of extension the ketoreductase and dehydratase are active. The enoyl reductase and C-MeT of pks1 are not active in the final round of extension. The acetyltransferase M4 appears to have a broad substrate selectivity for its acyl CoA substrate, allowing the in vitro synthesis of novel squalestatins. The biosynthesis of SQS1 requires several oxidative steps likely performed by oxidoreductases M1, R1 and R2. Finally, in support of the identification of the cluster as being responsible for SQS1 production, the cluster contains a gene encoding a putative squalene synthase (SS) R6, suggesting a likely mechanism for self-resistance. The sequence is that of Probable hydrolase M10 from Phoma sp. (strain ATCC 20986 / MF5453).